A 142-amino-acid polypeptide reads, in one-letter code: Large ribosomal subunit protein uL13 (142 aa).

The protein belongs to the universal ribosomal protein uL13 family. As to quaternary structure, part of the 50S ribosomal subunit.

Functionally, this protein is one of the early assembly proteins of the 50S ribosomal subunit, although it is not seen to bind rRNA by itself. It is important during the early stages of 50S assembly. This Buchnera aphidicola subsp. Schizaphis graminum (strain Sg) protein is Large ribosomal subunit protein uL13.